The sequence spans 361 residues: Fructose-1,6-bisphosphatase class 1 2 (361 aa).

Mg(2+)-binding residues include Glu110, Asp134, Leu136, and Asp137. Substrate is bound by residues 137-140 (DGSS), Asn231, Tyr264, and Lys294. Residue Glu300 coordinates Mg(2+).

This sequence belongs to the FBPase class 1 family. As to quaternary structure, homotetramer. It depends on Mg(2+) as a cofactor.

It localises to the cytoplasm. The catalysed reaction is beta-D-fructose 1,6-bisphosphate + H2O = beta-D-fructose 6-phosphate + phosphate. Its pathway is carbohydrate biosynthesis; gluconeogenesis. This chain is Fructose-1,6-bisphosphatase class 1 2, found in Salinibacter ruber (strain DSM 13855 / M31).